A 321-amino-acid polypeptide reads, in one-letter code: Reticulon-2 (321 aa).

Disordered regions lie at residues 1 to 36 (MGHV…SPVT) and 65 to 85 (PPVR…PREE). The Reticulon domain occupies 134–321 (VKDLLYWRDI…TVKKPPAKQK (188 aa)). 2 helical membrane-spanning segments follow: residues 163 to 183 (FSVI…TLTL) and 250 to 270 (FLVI…ITVL).

It is found in the endoplasmic reticulum membrane. The protein localises to the sarcoplasmic reticulum membrane. Its subcellular location is the cell membrane. The protein resides in the sarcolemma. It localises to the T-tubule. It is found in the cytoplasm. The protein localises to the myofibril. Its subcellular location is the sarcomere. The protein resides in the z line. It localises to the cytoskeleton. Functionally, inhibits amyloid precursor protein processing, probably by blocking BACE1 activity. Enhances trafficking of the glutamate transporter SLC1A1/EAAC1 from the endoplasmic reticulum to the cell surface. Plays a role in the translocation of SLC2A4/GLUT4 from intracellular membranes to the cell membrane which facilitates the uptake of glucose into the cell. In Xenopus tropicalis (Western clawed frog), this protein is Reticulon-2.